We begin with the raw amino-acid sequence, 128 residues long: Aspartate 1-decarboxylase (128 aa).

Ser25 serves as the catalytic Schiff-base intermediate with substrate; via pyruvic acid. Ser25 bears the Pyruvic acid (Ser) mark. Thr57 is a substrate binding site. Catalysis depends on Tyr58, which acts as the Proton donor. Gly73–Ala75 is a binding site for substrate.

It belongs to the PanD family. In terms of assembly, heterooctamer of four alpha and four beta subunits. The cofactor is pyruvate. Is synthesized initially as an inactive proenzyme, which is activated by self-cleavage at a specific serine bond to produce a beta-subunit with a hydroxyl group at its C-terminus and an alpha-subunit with a pyruvoyl group at its N-terminus.

It localises to the cytoplasm. The enzyme catalyses L-aspartate + H(+) = beta-alanine + CO2. The protein operates within cofactor biosynthesis; (R)-pantothenate biosynthesis; beta-alanine from L-aspartate: step 1/1. Its function is as follows. Catalyzes the pyruvoyl-dependent decarboxylation of aspartate to produce beta-alanine. The sequence is that of Aspartate 1-decarboxylase from Burkholderia multivorans (strain ATCC 17616 / 249).